We begin with the raw amino-acid sequence, 152 residues long: MAKRVQVVLTKNVNKLGKSGDLVEVAPGYARNYLLPQGIANIATPGILRQVEQRREKERQRLLAERQEAEARKTALQTIGRFVIRKQVGEGEAIFGTVTTQEVADVIKENTSQEIDRRGITLPEISKTGFYKAQVKLHPEVTAEIEIQVAPL.

This sequence belongs to the bacterial ribosomal protein bL9 family.

In terms of biological role, binds to the 23S rRNA. This chain is Large ribosomal subunit protein bL9, found in Gloeothece citriformis (strain PCC 7424) (Cyanothece sp. (strain PCC 7424)).